Consider the following 114-residue polypeptide: Large ribosomal subunit protein bL19 (114 aa).

Belongs to the bacterial ribosomal protein bL19 family.

Functionally, this protein is located at the 30S-50S ribosomal subunit interface and may play a role in the structure and function of the aminoacyl-tRNA binding site. The polypeptide is Large ribosomal subunit protein bL19 (Listeria welshimeri serovar 6b (strain ATCC 35897 / DSM 20650 / CCUG 15529 / CIP 8149 / NCTC 11857 / SLCC 5334 / V8)).